Here is a 185-residue protein sequence, read N- to C-terminus: MVSSFRVQQAAREIRAGAVIAYPTEAVWGLGCDPWNEDAVYRLLALKSRPVDKGLILIADNIRQFDFLFEDFPEDWIDRMGSTWPGPNTWLVPHQDLLPEWVTGQHDTVALRVSDHPVVRELCALVGPLISTSCNPGGRPAAKTRLRVEQYFHGQLDLVLGGALGGRKNPSVIRNLATGEVVRPG.

One can recognise a YrdC-like domain in the interval 4–185; the sequence is SFRVQQAARE…LATGEVVRPG (182 aa).

This sequence belongs to the SUA5 family. TsaC subfamily.

The protein localises to the cytoplasm. It catalyses the reaction L-threonine + hydrogencarbonate + ATP = L-threonylcarbamoyladenylate + diphosphate + H2O. Required for the formation of a threonylcarbamoyl group on adenosine at position 37 (t(6)A37) in tRNAs that read codons beginning with adenine. Catalyzes the conversion of L-threonine, HCO(3)(-)/CO(2) and ATP to give threonylcarbamoyl-AMP (TC-AMP) as the acyladenylate intermediate, with the release of diphosphate. The protein is Threonylcarbamoyl-AMP synthase of Pseudomonas putida (strain ATCC 700007 / DSM 6899 / JCM 31910 / BCRC 17059 / LMG 24140 / F1).